Reading from the N-terminus, the 366-residue chain is sn-glycerol-3-phosphate import ATP-binding protein UgpC (366 aa).

Residues 4–235 form the ABC transporter domain; the sequence is LSLRNVQKTY…PASTFVAGFI (232 aa). 37-44 is a binding site for ATP; sequence GPSGCGKS.

It belongs to the ABC transporter superfamily. sn-glycerol-3-phosphate importer (TC 3.A.1.1.3) family. In terms of assembly, the complex is composed of two ATP-binding proteins (UgpC), two transmembrane proteins (UgpA and UgpE) and a solute-binding protein (UgpB).

Its subcellular location is the cell inner membrane. It catalyses the reaction sn-glycerol 3-phosphate(out) + ATP + H2O = sn-glycerol 3-phosphate(in) + ADP + phosphate + H(+). Part of the ABC transporter complex UgpBAEC involved in sn-glycerol-3-phosphate (G3P) import. Responsible for energy coupling to the transport system. In Cupriavidus necator (strain ATCC 17699 / DSM 428 / KCTC 22496 / NCIMB 10442 / H16 / Stanier 337) (Ralstonia eutropha), this protein is sn-glycerol-3-phosphate import ATP-binding protein UgpC.